Consider the following 127-residue polypeptide: Small ribosomal subunit protein uS17m (127 aa).

This sequence belongs to the universal ribosomal protein uS17 family.

It is found in the mitochondrion. In Dictyostelium discoideum (Social amoeba), this protein is Small ribosomal subunit protein uS17m (mrps17).